Here is a 62-residue protein sequence, read N- to C-terminus: UPF0434 protein FTL_1400 (62 aa).

Belongs to the UPF0434 family.

The chain is UPF0434 protein FTL_1400 from Francisella tularensis subsp. holarctica (strain LVS).